A 2016-amino-acid chain; its full sequence is Sodium channel protein type 5 subunit alpha (2016 aa).

Topologically, residues 1-129 (MANFLLPRGT…IRRAAVKILV (129 aa)) are cytoplasmic. The tract at residues 28 to 56 (MAEKQARGSTTLQESREGLPEEEAPRPQL) is disordered. Position 36 is a phosphoserine (Ser36). Position 38 is a phosphothreonine (Thr38). Residues 41–52 (ESREGLPEEEAP) show a composition bias toward basic and acidic residues. Residues 113–420 (VLSPFHPIRR…VVAMAYEEQN (308 aa)) form an I repeat. Residues 130-149 (HSLFNMLIMCTILTNCVFMA) form a helical membrane-spanning segment. The Extracellular portion of the chain corresponds to 150-157 (QHDPPPWT). Residues 158–179 (KYVEYTFTAIYTFESLVKILAR) form a helical membrane-spanning segment. Topologically, residues 180 to 188 (GFCLHAFTF) are cytoplasmic. A helical membrane pass occupies residues 189-209 (LRDPWNWLDFSVIIMAYTTEF). Residues 210-216 (VDLGNVS) are Extracellular-facing. Asn214 is a glycosylation site (N-linked (GlcNAc...) asparagine). The helical transmembrane segment at 217–236 (ALRTFRVLRALKTISVISGL) threads the bilayer. Residues 237–249 (KTIVGALIQSVKK) are Cytoplasmic-facing. A helical transmembrane segment spans residues 250–272 (LADVMVLTVFCLSVFALIGLQLF). Residues 273–357 (MGNLRHKCVR…PDHGYTSFDS (85 aa)) lie on the Extracellular side of the membrane. A disulfide bridge links Cys280 with Cys335. N-linked (GlcNAc...) asparagine glycans are attached at residues Asn283, Asn288, Asn291, Asn318, and Asn328. The pore-forming intramembrane region spans 358 to 378 (FAWAFLALFRLMTQDCWERLY). Topologically, residues 379–386 (QQTLRSAG) are extracellular. The chain crosses the membrane as a helical span at residues 387-413 (KIYMIFFMLVIFLGSFYLVNLILAVVA). At 414–719 (MAYEEQNQAT…VKLVVMDPFT (306 aa)) the chain is on the cytoplasmic side. 4 positions are modified to phosphoserine: Ser457, Ser460, Ser483, and Ser484. A disordered region spans residues 461-591 (LEMSPLAPVN…APGHALHGKK (131 aa)). Phosphothreonine is present on Thr486. Residues 491–503 (EDRLPKSDSEDGP) show a composition bias toward basic and acidic residues. Ser497 and Ser510 each carry phosphoserine. Over residues 509 to 528 (LSLTRGLSRTSMKPRSSRGS) the composition is skewed to polar residues. 2 positions are modified to dimethylated arginine; alternate: Arg513 and Arg526. Omega-N-methylarginine; alternate is present on residues Arg513 and Arg526. Phosphoserine occurs at positions 539, 571, 664, and 667. A compositionally biased stretch (polar residues) spans 570-580 (TSAQGQPSPGT). At Arg680 the chain carries Dimethylated arginine; alternate. Arg680 carries the post-translational modification Omega-N-methylarginine; alternate. The stretch at 699 to 969 (CCPLWMSIKQ…QLALARIQRG (271 aa)) is one II repeat. The chain crosses the membrane as a helical span at residues 720-737 (DLTITMCIVLNTLFMALE). Residues 738 to 746 (HYNMTSEFE) lie on the Extracellular side of the membrane. N-linked (GlcNAc...) asparagine glycosylation occurs at Asn740. The chain crosses the membrane as a helical span at residues 747–769 (EMLQVGNLVFTGIFTAEMTFKII). Topologically, residues 770–775 (ALDPYY) are cytoplasmic. A helical membrane pass occupies residues 776–796 (YFQQGWNIFDSIIVILSLMEL). The Extracellular portion of the chain corresponds to 797-806 (GLSRMSNLSV). An N-linked (GlcNAc...) asparagine glycan is attached at Asn803. A helical membrane pass occupies residues 807 to 821 (LRSFRLLRVFKLAKS). At 822–838 (WPTLNTLIKIIGNSVGA) the chain is on the cytoplasmic side. A helical membrane pass occupies residues 839–860 (LGNLTLVLAIIVFIFAVVGMQL). Residues 861 to 884 (FGKNYSELRDSDSGLLPRWHMMDF) are Extracellular-facing. An N-linked (GlcNAc...) asparagine glycan is attached at Asn864. The segment at residues 885 to 903 (FHAFLIIFRILCGEWIETM) is an intramembrane region (pore-forming). Over 904 to 912 (WDCMEVSGQ) the chain is Extracellular. The cysteines at positions 906 and 915 are disulfide-linked. The helical transmembrane segment at 913–941 (SLCLLVFLLVMVIGNLVVLNLFLALLLSS) threads the bilayer. Residues 942–1203 (FSADNLTAPD…LRKTCYHIVE (262 aa)) are Cytoplasmic-facing. The tract at residues 1005–1141 (IATPYSPPPP…PEDSCSEGST (137 aa)) is disordered. The span at 1015–1030 (ETEKVPPTRKETRFEE) shows a compositional bias: basic and acidic residues. Residues 1033–1044 (QPGQGTPGDPEP) are compositionally biased toward low complexity. Acidic residues predominate over residues 1054–1071 (SDTDDQEEDEENSLGTEE). Residues 1096–1113 (SQVSATASSEAEASASQA) show a composition bias toward low complexity. Residues 1187 to 1501 (PGKVWWRLRK…KKYYNAMKKL (315 aa)) form an III repeat. The helical transmembrane segment at 1204–1225 (HSWFETFIIFMILLSSGALAFE) threads the bilayer. Residues 1226-1236 (DIYLEERKTIK) lie on the Extracellular side of the membrane. Residues 1237–1259 (VLLEYADKMFTYVFVLEMLLKWV) form a helical membrane-spanning segment. Over 1260–1268 (AYGFKKYFT) the chain is Cytoplasmic. The helical transmembrane segment at 1269–1291 (NAWCWLDFLIVDVSLVSLVANTL) threads the bilayer. At 1292–1297 (GFAEMG) the chain is on the extracellular side. Residues 1298–1317 (PIKSLRTLRALRPLRALSRF) traverse the membrane as a helical segment. The Cytoplasmic portion of the chain corresponds to 1318–1330 (EGMRVVVNALVGA). Residues 1331-1355 (IPSIMNVLLVCLIFWLIFSIMGVNL) traverse the membrane as a helical segment. Over 1356–1400 (FAGKFGRCINQTEGDLPLNYTIVNNKSQCESLNLTGELYWTKVKV) the chain is Extracellular. 4 N-linked (GlcNAc...) asparagine glycosylation sites follow: Asn1365, Asn1374, Asn1380, and Asn1388. Residues 1401–1422 (NFDNVGAGYLALLQVATFKGWM) constitute an intramembrane region (pore-forming). Residues 1423 to 1445 (DIMYAAVDSRGYEEQPQWEYNLY) lie on the Extracellular side of the membrane. The chain crosses the membrane as a helical span at residues 1446-1470 (MYIYFVIFIIFGSFFTLNLFIGVII). Topologically, residues 1471-1528 (DNFNQQKKKLGGQDIFMTEEQKKYYNAMKKLGSKKPQKPIPRPLNKYQGFIFDIVTKQ) are cytoplasmic. Ser1503 is modified (phosphoserine; by PKC). Residues 1510–1807 (IPRPLNKYQG…WEKFDPEATQ (298 aa)) form an IV repeat. Residues 1529–1547 (AFDVTIMFLICLNMVTMMV) form a helical membrane-spanning segment. Residues 1548 to 1558 (ETDDQSPEKIN) are Extracellular-facing. The helical transmembrane segment at 1559-1580 (ILAKINLLFVAIFTGECIVKLA) threads the bilayer. The Cytoplasmic segment spans residues 1581–1589 (ALRHYYFTN). Residues 1590 to 1612 (SWNIFDFVVVILSIVGTVLSDII) form a helical membrane-spanning segment. Residues 1613 to 1619 (QKYFFSP) lie on the Extracellular side of the membrane. A helical membrane pass occupies residues 1620–1640 (TLFRVIRLARIGRILRLIRGA). Residues 1641-1650 (KGIRTLLFAL) lie on the Cytoplasmic side of the membrane. The chain crosses the membrane as a helical span at residues 1651 to 1679 (MMSLPALFNIGLLLFLVMFIYSIFGMANF). Over 1680-1697 (AYVKWEAGIDDMFNFQTF) the chain is Extracellular. Positions 1698-1714 (ANSMLCLFQITTSAGWD) form an intramembrane region, pore-forming. The Extracellular segment spans residues 1715-1745 (GLLSPILNTGPPYCDPTLPNSNGSRGDCGSP). The N-linked (GlcNAc...) asparagine glycan is linked to Asn1736. A helical membrane pass occupies residues 1746–1771 (AVGILFFTTYIIISFLIVVNMYIAII). The Cytoplasmic segment spans residues 1772–2016 (LENFSVATEE…SPDRDRESIV (245 aa)). The tract at residues 1839 to 1901 (DLPMVSGDRI…ITTTLRRKHE (63 aa)) is interaction with FGF13. The IQ domain occupies 1901–1930 (EEVSAMVIQRAFRRHLLQRSLKHASFLFRQ). A compositionally biased stretch (low complexity) spans 1959–1979 (PLGPPSSSSISSTSFPPSYDS). The disordered stretch occupies residues 1959 to 2016 (PLGPPSSSSISSTSFPPSYDSVTRATSDNLQVRGSDYSHSEDLADFPPSPDRDRESIV). The segment at 1974–1977 (PPSY) is interaction with NEDD4, NEDD4L and WWP2. Residues 1981–1990 (TRATSDNLQV) are compositionally biased toward polar residues.

Belongs to the sodium channel (TC 1.A.1.10) family. Nav1.5/SCN5A subfamily. As to quaternary structure, cannot form the same regulatory interactions with beta subunits as other Navs do. Interacts with the PDZ domain of the syntrophin SNTA1, SNTB1 and SNTB2. Interacts with NEDD4, NEDD4L, WWP2 and GPD1L. Interacts with CALM. Interacts with FGF13; the interaction is direct and FGF13 may regulate SNC5A density at membranes and function. May also interact with FGF12 and FGF14. Interacts with TMEM233. Interacts with the spider Jingzhaotoxin-I (AC P83974, AC B1P1B7, AC B1P1B8). Interacts with ANK3. Interacts with PKP2 (via N-terminus). Interacts with XIRP2; the interaction is required for normal action potential configuration in the heart. In terms of processing, ubiquitinated by NEDD4L; which promotes its endocytosis. Does not seem to be ubiquitinated by NEDD4 or WWP2. Phosphorylation at Ser-1503 by PKC in a highly conserved cytoplasmic loop slows inactivation of the sodium channel and reduces peak sodium currents. Regulated through phosphorylation by CaMK2D. Post-translationally, lacks the cysteine which covalently binds the conotoxin GVIIJ. This cysteine (position 868) is speculated in other sodium channel subunits alpha to be implied in covalent binding with the sodium channel subunit beta-2 or beta-4. In terms of processing, N-glycosylated at Asn-318, probably hinders potential interaction with regulatory subunits. As to expression, found in jejunal circular smooth muscle cells (at protein level). Expressed in human atrial and ventricular cardiac muscle but not in adult skeletal muscle, brain, myometrium, liver, or spleen. Isoform 4 is expressed in brain.

The protein localises to the cell membrane. It localises to the cytoplasm. It is found in the perinuclear region. Its subcellular location is the sarcolemma. The protein resides in the T-tubule. The protein localises to the cell junction. The catalysed reaction is Na(+)(in) = Na(+)(out). Channel inactivation is regulated by intracellular calcium levels. It is a tetrodotoxin-resistant voltage-gated Na(+) channel (Nav). Pore-forming subunit of Nav1.5, a voltage-gated sodium (Nav) channel that directly mediates the depolarizing phase of action potentials in excitable membranes. Navs, also called VGSCs (voltage-gated sodium channels) or VDSCs (voltage-dependent sodium channels), operate by switching between closed and open conformations depending on the voltage difference across the membrane. In the open conformation they allow Na(+) ions to selectively pass through the pore, along their electrochemical gradient. The influx of Na(+) ions provokes membrane depolarization, initiating the propagation of electrical signals throughout cells and tissues. Nav1.5 is the predominant sodium channel expressed in myocardial cells and it is responsible for the initial upstroke of the action potential in cardiac myocytes, thereby initiating the heartbeat. Required for normal electrical conduction including formation of the infranodal ventricular conduction system and normal action potential configuration, as a result of its interaction with XIRP2. In Homo sapiens (Human), this protein is Sodium channel protein type 5 subunit alpha.